The sequence spans 69 residues: Bowman-Birk type proteinase inhibitor A2 (69 aa).

4 disulfides stabilise this stretch: cysteine 12–cysteine 31, cysteine 18–cysteine 29, cysteine 38–cysteine 45, and cysteine 42–cysteine 59.

This sequence belongs to the Bowman-Birk serine protease inhibitor family. Expressed in bulb (at protein level).

Serine protease inhibitor. This chain is Bowman-Birk type proteinase inhibitor A2, found in Hyacinthus orientalis (Common hyacinth).